The primary structure comprises 325 residues: Ribose-phosphate pyrophosphokinase (325 aa).

ATP-binding positions include 45-47 (NGE) and 104-105 (RQ). The Mg(2+) site is built by His-138 and Asp-178. Lys-202 is a catalytic residue. Residues Arg-204, Asp-230, and 234 to 238 (DTGGT) contribute to the D-ribose 5-phosphate site.

It belongs to the ribose-phosphate pyrophosphokinase family. Class I subfamily. Homohexamer. It depends on Mg(2+) as a cofactor.

The protein resides in the cytoplasm. The enzyme catalyses D-ribose 5-phosphate + ATP = 5-phospho-alpha-D-ribose 1-diphosphate + AMP + H(+). Its pathway is metabolic intermediate biosynthesis; 5-phospho-alpha-D-ribose 1-diphosphate biosynthesis; 5-phospho-alpha-D-ribose 1-diphosphate from D-ribose 5-phosphate (route I): step 1/1. Involved in the biosynthesis of the central metabolite phospho-alpha-D-ribosyl-1-pyrophosphate (PRPP) via the transfer of pyrophosphoryl group from ATP to 1-hydroxyl of ribose-5-phosphate (Rib-5-P). The polypeptide is Ribose-phosphate pyrophosphokinase (Corynebacterium glutamicum (strain ATCC 13032 / DSM 20300 / JCM 1318 / BCRC 11384 / CCUG 27702 / LMG 3730 / NBRC 12168 / NCIMB 10025 / NRRL B-2784 / 534)).